Reading from the N-terminus, the 428-residue chain is Adenylosuccinate synthetase (428 aa).

Residues 12–18 (GDEGKGK) and 40–42 (GHT) each bind GTP. Asp-13 serves as the catalytic Proton acceptor. Asp-13 and Gly-40 together coordinate Mg(2+). IMP is bound by residues 13–16 (DEGK), 38–41 (NAGH), Thr-128, Arg-142, Gln-223, Thr-238, and Arg-302. His-41 serves as the catalytic Proton donor. 298-304 (TTTGRPR) serves as a coordination point for substrate. GTP is bound by residues Arg-304, 330-332 (KLD), and 412-414 (GVG).

This sequence belongs to the adenylosuccinate synthetase family. As to quaternary structure, homodimer. Mg(2+) serves as cofactor.

It is found in the cytoplasm. It catalyses the reaction IMP + L-aspartate + GTP = N(6)-(1,2-dicarboxyethyl)-AMP + GDP + phosphate + 2 H(+). It functions in the pathway purine metabolism; AMP biosynthesis via de novo pathway; AMP from IMP: step 1/2. Functionally, plays an important role in the de novo pathway of purine nucleotide biosynthesis. Catalyzes the first committed step in the biosynthesis of AMP from IMP. This Kineococcus radiotolerans (strain ATCC BAA-149 / DSM 14245 / SRS30216) protein is Adenylosuccinate synthetase.